Consider the following 466-residue polypeptide: Ribulose bisphosphate carboxylase large chain (466 aa).

Lys-5 is subject to N6,N6,N6-trimethyllysine. The substrate site is built by Asn-114 and Thr-164. Lys-166 serves as the catalytic Proton acceptor. Lys-168 provides a ligand contact to substrate. Positions 192, 194, and 195 each coordinate Mg(2+). Lys-192 carries the post-translational modification N6-carboxylysine. The active-site Proton acceptor is His-285. Substrate contacts are provided by Arg-286, His-318, and Ser-370.

Belongs to the RuBisCO large chain family. Type I subfamily. As to quaternary structure, heterohexadecamer of 8 large chains and 8 small chains; disulfide-linked. The disulfide link is formed within the large subunit homodimers. Mg(2+) is required as a cofactor. In terms of processing, the disulfide bond which can form in the large chain dimeric partners within the hexadecamer appears to be associated with oxidative stress and protein turnover.

The protein resides in the plastid. The protein localises to the chloroplast. The catalysed reaction is 2 (2R)-3-phosphoglycerate + 2 H(+) = D-ribulose 1,5-bisphosphate + CO2 + H2O. The enzyme catalyses D-ribulose 1,5-bisphosphate + O2 = 2-phosphoglycolate + (2R)-3-phosphoglycerate + 2 H(+). In terms of biological role, ruBisCO catalyzes two reactions: the carboxylation of D-ribulose 1,5-bisphosphate, the primary event in carbon dioxide fixation, as well as the oxidative fragmentation of the pentose substrate in the photorespiration process. Both reactions occur simultaneously and in competition at the same active site. This chain is Ribulose bisphosphate carboxylase large chain, found in Tropaeolum majus (Common nasturtium).